Consider the following 526-residue polypeptide: Probable Xaa-Pro aminopeptidase MGG_05684 (526 aa).

Mn(2+)-binding residues include Asp285, Asp296, Glu447, and Glu488.

It belongs to the peptidase M24B family. Mn(2+) is required as a cofactor.

It catalyses the reaction Release of any N-terminal amino acid, including proline, that is linked to proline, even from a dipeptide or tripeptide.. Its function is as follows. Catalyzes the removal of a penultimate prolyl residue from the N-termini of peptides. The sequence is that of Probable Xaa-Pro aminopeptidase MGG_05684 from Pyricularia oryzae (strain 70-15 / ATCC MYA-4617 / FGSC 8958) (Rice blast fungus).